The primary structure comprises 344 residues: Intraflagellar transport protein 46 (344 aa).

Acidic residues predominate over residues 1 to 16 (MDDSMDYPDRDGDDLD). A disordered region spans residues 1–100 (MDDSMDYPDR…IANSDEAPPG (100 aa)). Positions 18-30 (FQGTARSQVVQNQ) are enriched in polar residues.

The protein belongs to the IFT46 family. In terms of assembly, component of the IFT complex B, the core composed of IFT25, IFT27, IFT46, IFT52, IFT74, IFT81 and IFT88 as well as associated subunits IFT20, IFT57, IFT80 and IFT172. Interacts with IFT25, IFT52, IFT70, IFT88 and DAW1.

Its subcellular location is the cytoplasm. The protein resides in the cytoskeleton. It localises to the cilium basal body. It is found in the cell projection. The protein localises to the cilium. Its function is as follows. Forms part of a complex involved in intraflagellar transport (IFT), the bi-directional movement of particles required for the assembly, maintenance and functioning of primary cilia. Plays a role in maintaining IFT complex B stability. The chain is Intraflagellar transport protein 46 from Chlamydomonas reinhardtii (Chlamydomonas smithii).